Reading from the N-terminus, the 542-residue chain is CTP synthase (542 aa).

The tract at residues 1-265 is amidoligase domain; the sequence is MARYVFITGG…DDEVLAAFGI (265 aa). Serine 13 is a binding site for CTP. Serine 13 provides a ligand contact to UTP. ATP-binding positions include 14–19 and aspartate 71; that span reads SLGKGI. 2 residues coordinate Mg(2+): aspartate 71 and glutamate 139. CTP-binding positions include 146 to 148, 186 to 191, and lysine 222; these read DIE and KTKPTQ. Residues 186-191 and lysine 222 contribute to the UTP site; that span reads KTKPTQ. A Glutamine amidotransferase type-1 domain is found at 291-541; it reads TIAIVGKYTG…IEAATEQSRL (251 aa). Glycine 353 serves as a coordination point for L-glutamine. Cysteine 380 serves as the catalytic Nucleophile; for glutamine hydrolysis. Residues 381 to 384, glutamate 404, and arginine 469 contribute to the L-glutamine site; that span reads FGMQ. Active-site residues include histidine 514 and glutamate 516.

It belongs to the CTP synthase family. As to quaternary structure, homotetramer.

It carries out the reaction UTP + L-glutamine + ATP + H2O = CTP + L-glutamate + ADP + phosphate + 2 H(+). The catalysed reaction is L-glutamine + H2O = L-glutamate + NH4(+). It catalyses the reaction UTP + NH4(+) + ATP = CTP + ADP + phosphate + 2 H(+). The protein operates within pyrimidine metabolism; CTP biosynthesis via de novo pathway; CTP from UDP: step 2/2. Its activity is regulated as follows. Allosterically activated by GTP, when glutamine is the substrate; GTP has no effect on the reaction when ammonia is the substrate. The allosteric effector GTP functions by stabilizing the protein conformation that binds the tetrahedral intermediate(s) formed during glutamine hydrolysis. Inhibited by the product CTP, via allosteric rather than competitive inhibition. Functionally, catalyzes the ATP-dependent amination of UTP to CTP with either L-glutamine or ammonia as the source of nitrogen. Regulates intracellular CTP levels through interactions with the four ribonucleotide triphosphates. The sequence is that of CTP synthase from Rhizobium etli (strain ATCC 51251 / DSM 11541 / JCM 21823 / NBRC 15573 / CFN 42).